The sequence spans 572 residues: Mitochondrial chaperone TCM62 (572 aa).

The N-terminal 16 residues, 1–16 (MLRNCLRKLGNHQTKC), are a transit peptide targeting the mitochondrion. Residues 17–471 (SVKTLHTPIY…KANEPNFMTK (455 aa)) are Mitochondrial matrix-facing. Residues 472-488 (VGINAVLSAVILPSEVA) traverse the membrane as a helical segment. The Mitochondrial intermembrane segment spans residues 489-572 (FKNAYGYNYY…VYKKPERHKA (84 aa)).

Belongs to the chaperonin (HSP60) family. In terms of assembly, forms a high molecular mass protein complex of approximately 850 kDa.

It is found in the mitochondrion inner membrane. Its function is as follows. Chaperone. Required for the assembly of succinate dehydrogenase subunits. Ensures mitochondrial gene expression at elevated temperatures and prevents heat-aggregation of the ribosomal subunit VAR1. The polypeptide is Mitochondrial chaperone TCM62 (TCM62) (Saccharomyces cerevisiae (strain ATCC 204508 / S288c) (Baker's yeast)).